The chain runs to 261 residues: Claudin-18 (261 aa).

Over 1–6 (MATTTC) the chain is Cytoplasmic. The chain crosses the membrane as a helical span at residues 7 to 27 (QVVGLLLSLLGLAGCIAATGM). Residues 28 to 80 (DMWSTQDLYDNPVTSVFQYEGLWRSCVQQSSGFTECRPYFTILGLPAMLQAVR) are Extracellular-facing. A helical transmembrane segment spans residues 81–101 (ALMIVGIVLGVIGILVSIFAL). Topologically, residues 102–122 (KCIRIGSMDDSAKAKMTLTSG) are cytoplasmic. A helical transmembrane segment spans residues 123–143 (IMFIISGVCAIIGVSVFANML). The Extracellular segment spans residues 144-173 (VTNFWMSTANMYSGMGGMVQTVQTRYTFGA). Residues 174-194 (ALFVGWIAGGLTLIGGVMMCI) traverse the membrane as a helical segment. At 195–261 (ACRGLTPDDR…QSHPTKYDYV (67 aa)) the chain is on the cytoplasmic side. The tract at residues 195 to 261 (ACRGLTPDDR…QSHPTKYDYV (67 aa)) is required for role in regulation of RANKL-induced osteoclast differentiation. Phosphoserine is present on Ser214. The disordered stretch occupies residues 242-261 (DGGARTEDDEQSHPTKYDYV).

The protein belongs to the claudin family. Interacts with TJP2/ZO-2. Interacts with TJP1/ZO-1. Interacts with YAP1 (phosphorylated); the interaction sequesters YAP1 away from the nucleus and thereby restricts transcription of YAP1 target genes. Interacts with CLDN19. In terms of tissue distribution, expressed in the lung (at protein level).

The protein localises to the cell junction. Its subcellular location is the tight junction. The protein resides in the cell membrane. Involved in alveolar fluid homeostasis via regulation of alveolar epithelial tight junction composition and therefore ion transport and solute permeability, potentially via downstream regulation of the actin cytoskeleton organization and beta-2-adrenergic signaling. Required for lung alveolarization and maintenance of the paracellular alveolar epithelial barrier. Acts to maintain epithelial progenitor cell proliferation and organ size, via regulation of YAP1 localization away from the nucleus and thereby restriction of YAP1 target gene transcription. Acts as a negative regulator of RANKL-induced osteoclast differentiation, potentially via relocation of TJP2/ZO-2 away from the nucleus, subsequently involved in bone resorption in response to calcium deficiency. Mediates the osteoprotective effects of estrogen, potentially via acting downstream of estrogen signaling independently of RANKL signaling pathways. In terms of biological role, required for the formation of the gastric paracellular barrier via its role in tight junction formation, thereby involved in the response to gastric acidification. The protein is Claudin-18 of Rattus norvegicus (Rat).